The chain runs to 180 residues: Protein YOP1 (180 aa).

The Cytoplasmic portion of the chain corresponds to 1–35 (MADYLKLFQDSLKGLDTKFAGNQILSRIEAQTKLP). A helical transmembrane segment spans residues 36–55 (RSYVIVGLVAVYFLLIFINV). The Lumenal segment spans residues 56 to 57 (GG). A helical transmembrane segment spans residues 58–78 (IGEILSNFVGFCIPTYYSLKA). Topologically, residues 79 to 88 (LKTATSTDDT) are cytoplasmic. A helical membrane pass occupies residues 89 to 105 (QLLTYWIVFSFLSVIEF). The Lumenal portion of the chain corresponds to 106–108 (WSK). Residues 109–127 (AILYWVPFYWFFKTVFLLY) traverse the membrane as a helical segment. Residues 128 to 180 (IAIPSFGGAQLVYTRLISPFSDKYLPIVEGKSGELAQKVEAAANNAKASGYSR) are Cytoplasmic-facing.

Belongs to the DP1 family. In terms of assembly, oligomer.

It is found in the endoplasmic reticulum membrane. The protein localises to the golgi apparatus membrane. Its function is as follows. Required to generate and maintain the structure of the tubular endoplasmic reticulum network and the vacuole. Induces high curvature in membranes and causes membrane tubule formation. Involved in membrane/vesicle trafficking. In Kluyveromyces lactis (strain ATCC 8585 / CBS 2359 / DSM 70799 / NBRC 1267 / NRRL Y-1140 / WM37) (Yeast), this protein is Protein YOP1 (YOP1).